The sequence spans 92 residues: Secreted RxLR effector protein RXLR-C02 (92 aa).

The N-terminal stretch at 1–21 is a signal peptide; the sequence is MQFHLLVMTTIAASFAATGSA. The RxLR signature appears at 48 to 51; it reads RALR. The tract at residues 54–75 is disordered; sequence ENRGLIGDDSDSSISDSDSEAK.

The protein belongs to the RxLR effector family.

Its subcellular location is the secreted. The protein localises to the host cytoplasm. It localises to the host nucleus. Secreted effector that suppresses pattern-triggered immunity (PTI) in plant host. The chain is Secreted RxLR effector protein RXLR-C02 from Plasmopara halstedii (Downy mildew of sunflower).